The chain runs to 284 residues: MKDLNKTIGVFVRPTHHQNALFKELEQAKEWVLTLLEDEGFESFMIDSLDGAKDAQLIKKAYAFLCLGGDGTILGALRMTHAHNKPCFGVRIGNLGFLSAVELNGLKDFLQDLKQNRIKLEEHLALEGRIGNTSFYAINEIVIAKKKALGVLDIKACAGHTPFNTYKGDGLIIATPLGSTAYNLSAHGPIVHALSQSYILTPLCDFSLTQRPLVLGAEFCLSFCAHEDALVVIDGQATYDLKANQPLYIQKSPTTTKLLQKNSRDYFKVLKEKLLWGESPNKKR.

The active-site Proton acceptor is Asp-70. NAD(+) contacts are provided by residues 70-71, 139-140, Lys-167, Asp-169, Leu-177, 180-185, and Gln-236; these read DG, NE, and TAYNLS.

It belongs to the NAD kinase family. It depends on a divalent metal cation as a cofactor.

The protein resides in the cytoplasm. It carries out the reaction NAD(+) + ATP = ADP + NADP(+) + H(+). In terms of biological role, involved in the regulation of the intracellular balance of NAD and NADP, and is a key enzyme in the biosynthesis of NADP. Catalyzes specifically the phosphorylation on 2'-hydroxyl of the adenosine moiety of NAD to yield NADP. This Helicobacter pylori (strain J99 / ATCC 700824) (Campylobacter pylori J99) protein is NAD kinase.